Consider the following 483-residue polypeptide: Keratin, type II cytoskeletal 8 (483 aa).

Residues 1–16 (MSIRVTQKSYKVSTSG) show a composition bias toward polar residues. The segment at 1-41 (MSIRVTQKSYKVSTSGPRAFSSRSYTSGPGSRISSSSFSRV) is disordered. Residues 1–90 (MSIRVTQKSY…DPNIQAVRTQ (90 aa)) are head. Serine 9 is modified (phosphoserine; by PKC/PRKCE). Residue lysine 11 forms a Glycyl lysine isopeptide (Lys-Gly) (interchain with G-Cter in SUMO2) linkage. A phosphoserine mark is found at serine 13, serine 15, serine 21, and serine 22. Arginine 23 bears the Omega-N-methylarginine mark. Phosphoserine; by PKC/PRKCE is present on serine 24. The segment covering 24-41 (SYTSGPGSRISSSSFSRV) has biased composition (low complexity). Threonine 26 is subject to Phosphothreonine. Serine 27 and serine 31 each carry phosphoserine. Arginine 32 is modified (omega-N-methylarginine). Residues serine 34, serine 37, and serine 39 each carry the phosphoserine modification. Arginine 40 is modified (omega-N-methylarginine). Phosphoserine is present on residues serine 43 and serine 44. Arginine 47 carries the asymmetric dimethylarginine; alternate modification. Omega-N-methylarginine; alternate is present on arginine 47. A Phosphoserine; by MAPK modification is found at serine 74. A coil 1A region spans residues 91–126 (EKEQIKTLNNKFASFIDKVRFLEQQNKMLETKWSLL). Residues 91 to 402 (EKEQIKTLNN…KLLEGEESRL (312 aa)) form the IF rod domain. Lysine 101 is modified (N6-malonyllysine). Glycyl lysine isopeptide (Lys-Gly) (interchain with G-Cter in SUMO2) cross-links involve residues lysine 122 and lysine 130. Residues 127 to 143 (QQQKTARSNMDNMFESY) are linker 1. A coil 1B region spans residues 144-235 (INNLRRQLET…QLYEEEIREL (92 aa)). Lysine 197 is covalently cross-linked (Glycyl lysine isopeptide (Lys-Gly) (interchain with G-Cter in SUMO1); alternate). A Glycyl lysine isopeptide (Lys-Gly) (interchain with G-Cter in SUMO2); alternate cross-link involves residue lysine 197. Lysine 207 carries the N6-acetyllysine modification. Tyrosine 228 is subject to Phosphotyrosine. Positions 236 to 259 (QSQISDTSVVLSMDNSRSLDMDSI) are linker 12. A phosphoserine mark is found at serine 253 and serine 258. Positions 260–398 (IAEVKAQYED…ATYRKLLEGE (139 aa)) are coil 2. The segment at 261-382 (AEVKAQYEDI…EYQELMNVKL (122 aa)) is necessary for interaction with PNN. Lysine 264 participates in a covalent cross-link: Glycyl lysine isopeptide (Lys-Gly) (interchain with G-Cter in SUMO2). Serine 274 carries the post-translational modification Phosphoserine. A Glycyl lysine isopeptide (Lys-Gly) (interchain with G-Cter in SUMO2) cross-link involves residue lysine 285. A Phosphoserine modification is found at serine 291. Residue lysine 295 forms a Glycyl lysine isopeptide (Lys-Gly) (interchain with G-Cter in SUMO2); alternate linkage. At lysine 295 the chain carries N6-acetyllysine; alternate. Lysine 304 is covalently cross-linked (Glycyl lysine isopeptide (Lys-Gly) (interchain with G-Cter in SUMO2)). A Glycyl lysine isopeptide (Lys-Gly) (interchain with G-Cter in SUMO2); alternate cross-link involves residue lysine 325. At lysine 325 the chain carries N6-acetyllysine; alternate. Serine 330 carries the phosphoserine modification. A Glycyl lysine isopeptide (Lys-Gly) (interchain with G-Cter in SUMO2) cross-link involves residue lysine 393. The segment at 399–483 (ESRLESGMQN…VSESSDVLPK (85 aa)) is tail. Phosphoserine occurs at positions 400, 404, 410, 417, and 424. A Phosphoserine; by CaMK2 and MAPK modification is found at serine 432. Lysine 472 is covalently cross-linked (Glycyl lysine isopeptide (Lys-Gly) (interchain with G-Cter in SUMO1); alternate). Lysine 472 participates in a covalent cross-link: Glycyl lysine isopeptide (Lys-Gly) (interchain with G-Cter in SUMO2); alternate. Residues serine 475, serine 477, and serine 478 each carry the phosphoserine modification.

It belongs to the intermediate filament family. As to quaternary structure, heterotetramer of two type I and two type II keratins. Forms a heterodimer with KRT18. Associates with KRT20. Interacts with PLEC isoform 1C, when in a heterodimer with KRT18. Interacts with PNN. When associated with KRT19, interacts with DMD. Interacts with TCHP. Interacts with APEX1. Interacts with GPER1. Interacts with EPPK1. Interacts with PKP1 and PKP2. (Microbial infection) Interacts with hepatitis C virus/HCV core protein. Phosphorylation on serine residues is enhanced during EGF stimulation and mitosis. Ser-74 phosphorylation plays an important role in keratin filament reorganization. In terms of processing, O-glycosylated. O-GlcNAcylation at multiple sites increases solubility, and decreases stability by inducing proteasomal degradation. Post-translationally, O-glycosylated (O-GlcNAcylated), in a cell cycle-dependent manner. As to expression, observed in muscle fibers accumulating in the costameres of myoplasm at the sarcolemma membrane in structures that contain dystrophin and spectrin. Expressed in gingival mucosa and hard palate of the oral cavity.

Its subcellular location is the cytoplasm. The protein resides in the nucleus. The protein localises to the nucleoplasm. It is found in the nucleus matrix. In terms of biological role, together with KRT19, helps to link the contractile apparatus to dystrophin at the costameres of striated muscle. The protein is Keratin, type II cytoskeletal 8 (KRT8) of Homo sapiens (Human).